A 273-amino-acid polypeptide reads, in one-letter code: Orotidine 5'-phosphate decarboxylase (273 aa).

Lys-96 acts as the Proton donor in catalysis.

Belongs to the OMP decarboxylase family. Type 2 subfamily.

The enzyme catalyses orotidine 5'-phosphate + H(+) = UMP + CO2. It functions in the pathway pyrimidine metabolism; UMP biosynthesis via de novo pathway; UMP from orotate: step 2/2. In Flavobacterium johnsoniae (strain ATCC 17061 / DSM 2064 / JCM 8514 / BCRC 14874 / CCUG 350202 / NBRC 14942 / NCIMB 11054 / UW101) (Cytophaga johnsonae), this protein is Orotidine 5'-phosphate decarboxylase.